The sequence spans 222 residues: Small ribosomal subunit protein uS3 (222 aa).

The KH type-2 domain maps to 39–107 (IRKYIKTKFY…QININIAEIK (69 aa)).

It belongs to the universal ribosomal protein uS3 family. As to quaternary structure, part of the 30S ribosomal subunit. Forms a tight complex with proteins S10 and S14.

Its function is as follows. Binds the lower part of the 30S subunit head. Binds mRNA in the 70S ribosome, positioning it for translation. The polypeptide is Small ribosomal subunit protein uS3 (Carboxydothermus hydrogenoformans (strain ATCC BAA-161 / DSM 6008 / Z-2901)).